Consider the following 220-residue polypeptide: Putative F-box protein At3g20705 (220 aa).

The region spanning 1 to 51 is the F-box domain; that stretch reads MMMMSNLPNDLVEEILSRVTVTFMRTVRSICKKWNALTKDRSFTNKYIRNI.

The polypeptide is Putative F-box protein At3g20705 (Arabidopsis thaliana (Mouse-ear cress)).